A 685-amino-acid chain; its full sequence is Bifunctional lycopene cyclase/phytoene synthase (685 aa).

Residues 15–255 (TLSYRHFHLL…LVSACFTFDR (241 aa)) are lycopene beta-cyclase. 7 helical membrane-spanning segments follow: residues 21–41 (FHLLWTLPLCAVLFLVARPFL), 48–68 (KLILLPIIAFVWTTPWDNLIV), 92–114 (YFFFVIQSLISTLWCTLLTRWAL), 129–149 (LATPAVVVCMLCFVLGLKAAV), 156–176 (YFGMITWWSSLPLALLLWGSV), 187–207 (GLAPFALSVLAPTFYLWASDV), and 231–251 (LPIEEMLFFLVTNLILVSACF). Residues 262 to 685 (QSVAENAPPL…RAVSAVYFGV (424 aa)) are phytoene synthase.

This sequence in the N-terminal section; belongs to the lycopene beta-cyclase family. In the C-terminal section; belongs to the phytoene/squalene synthase family.

It is found in the membrane. It carries out the reaction all-trans-lycopene = gamma-carotene. The catalysed reaction is gamma-carotene = all-trans-beta-carotene. It catalyses the reaction 2 (2E,6E,10E)-geranylgeranyl diphosphate = 15-cis-phytoene + 2 diphosphate. Its pathway is carotenoid biosynthesis; beta-carotene biosynthesis. It participates in carotenoid biosynthesis; phytoene biosynthesis; all-trans-phytoene from geranylgeranyl diphosphate: step 1/1. Bifunctional enzyme that catalyzes the reactions from geranylgeranyl diphosphate to phytoene (phytoene synthase) and lycopene to beta-carotene via the intermediate gamma-carotene (lycopene cyclase). The polypeptide is Bifunctional lycopene cyclase/phytoene synthase (Sporisorium reilianum (strain SRZ2) (Maize head smut fungus)).